The primary structure comprises 134 residues: Methylglyoxal synthase (134 aa).

The MGS-like domain occupies 1 to 134 (MNIALIAHDN…DWRERVKERG (134 aa)). Substrate is bound by residues His-8, Lys-12, 34–37 (TGTT), and 54–55 (SG). Residue Asp-60 is the Proton donor/acceptor of the active site. His-87 lines the substrate pocket.

It belongs to the methylglyoxal synthase family.

The catalysed reaction is dihydroxyacetone phosphate = methylglyoxal + phosphate. Functionally, catalyzes the formation of methylglyoxal from dihydroxyacetone phosphate. The protein is Methylglyoxal synthase of Alkaliphilus metalliredigens (strain QYMF).